We begin with the raw amino-acid sequence, 956 residues long: Calsyntenin-3 (956 aa).

Positions Met1–Gly20 are cleaved as a signal peptide. Residues Asn21–Ala850 lie on the Extracellular side of the membrane. Cadherin domains follow at residues Ile30 to Phe151 and Val152 to Phe271. Residues Asn333, Asn353, Asn513, and Asn743 are each glycosylated (N-linked (GlcNAc...) asparagine). The chain crosses the membrane as a helical span at residues Ala851–Phe871. Residues Arg872–Tyr956 lie on the Cytoplasmic side of the membrane. Residues Gly921–Ser937 show a composition bias toward acidic residues. The segment at Gly921 to Tyr956 is disordered. Residues Asp938 to Tyr956 show a composition bias toward basic and acidic residues.

Belongs to the calsyntenin family. Homooligomer and heterooligomer; mediates both homophilic and heterophilc interactions with clstn1 and clstn2 paralogs via cadherin domains. Interacts (via cadherin domains) with both alpha and beta isoforms of neurexins. As to expression, by 48 hours post-fertilization (hpf), widely expressed in the brain, with strong expression in the telencephalon and the midbrain. Not expressed in the optic tectum.

Its subcellular location is the postsynaptic cell membrane. The protein localises to the endoplasmic reticulum membrane. It localises to the golgi apparatus membrane. Its function is as follows. Synaptic adhesion molecule. Promotes synapse development by acting as a cell adhesion molecule at the postsynaptic membrane, which associates with presynaptic neurexins. The protein is Calsyntenin-3 of Danio rerio (Zebrafish).